We begin with the raw amino-acid sequence, 101 residues long: Large ribosomal subunit protein eL30 (101 aa).

This sequence belongs to the eukaryotic ribosomal protein eL30 family.

In Pyrobaculum neutrophilum (strain DSM 2338 / JCM 9278 / NBRC 100436 / V24Sta) (Thermoproteus neutrophilus), this protein is Large ribosomal subunit protein eL30.